The following is a 92-amino-acid chain: MANSPSAKKRAKQAEKRRSHNASLRSMVRTYIKNVVKAIDAKDAEKAQAAYVLAVPVIDRMADKGIIHKNKAARHKGRLNGHIKALNLAAAA.

A disordered region spans residues 1-23; that stretch reads MANSPSAKKRAKQAEKRRSHNAS. Positions 7–20 are enriched in basic residues; the sequence is AKKRAKQAEKRRSH.

It belongs to the bacterial ribosomal protein bS20 family.

Its function is as follows. Binds directly to 16S ribosomal RNA. This chain is Small ribosomal subunit protein bS20, found in Pseudomonas fluorescens (strain ATCC BAA-477 / NRRL B-23932 / Pf-5).